The chain runs to 123 residues: MARIAGIDLPKEKRVEIGLTYIYGIGLPTSQKILKETGVNSDTRVKDLTEEEVNLLRNYIKNLKIEGDLRREVALNIKRLIEIGSYRGIRHRKGLPVRGQKTKTNARTRKGPKKLVGAKKKSK.

Residues 92-123 (RKGLPVRGQKTKTNARTRKGPKKLVGAKKKSK) form a disordered region.

Belongs to the universal ribosomal protein uS13 family. As to quaternary structure, part of the 30S ribosomal subunit. Forms a loose heterodimer with protein S19. Forms two bridges to the 50S subunit in the 70S ribosome.

Functionally, located at the top of the head of the 30S subunit, it contacts several helices of the 16S rRNA. In the 70S ribosome it contacts the 23S rRNA (bridge B1a) and protein L5 of the 50S subunit (bridge B1b), connecting the 2 subunits; these bridges are implicated in subunit movement. Contacts the tRNAs in the A and P-sites. This is Small ribosomal subunit protein uS13 from Clostridium kluyveri (strain NBRC 12016).